A 327-amino-acid polypeptide reads, in one-letter code: Methionyl-tRNA formyltransferase (327 aa).

111–114 (SLLP) serves as a coordination point for (6S)-5,6,7,8-tetrahydrofolate.

This sequence belongs to the Fmt family.

The catalysed reaction is L-methionyl-tRNA(fMet) + (6R)-10-formyltetrahydrofolate = N-formyl-L-methionyl-tRNA(fMet) + (6S)-5,6,7,8-tetrahydrofolate + H(+). In terms of biological role, attaches a formyl group to the free amino group of methionyl-tRNA(fMet). The formyl group appears to play a dual role in the initiator identity of N-formylmethionyl-tRNA by promoting its recognition by IF2 and preventing the misappropriation of this tRNA by the elongation apparatus. The sequence is that of Methionyl-tRNA formyltransferase from Synechococcus elongatus (strain ATCC 33912 / PCC 7942 / FACHB-805) (Anacystis nidulans R2).